The following is a 484-amino-acid chain: Ribosome biogenesis protein YTM1 (484 aa).

The interval 13–95 is ubiquitin-like (UBL) domain; sequence VKVTFTTTEA…ESNLTLQYVR (83 aa). WD repeat units lie at residues 122–161, 168–206, 216–255, 288–328, 330–373, 379–419, and 448–484; these read SPSG…IATS, GHTA…HFSG, GHTG…APEA, IHSA…VVTT, STSH…ATTS, GHAN…PATQ, and GEGC…VVAE.

This sequence belongs to the WD repeat WDR12/YTM1 family. In terms of assembly, component of the NOP7 complex, composed of ERB1, NOP7 and YTM1. The complex is held together by ERB1, which interacts with NOP7 via its N-terminal domain and with YTM1 via a high-affinity interaction between the seven-bladed beta-propeller domains of the 2 proteins. The NOP7 complex associates with the 66S pre-ribosome. Interacts (via UBL domain) with MDN1 (via VWFA/MIDAS domain).

The protein resides in the nucleus. The protein localises to the nucleolus. It localises to the nucleoplasm. Functionally, component of the NOP7 complex, which is required for maturation of the 25S and 5.8S ribosomal RNAs and formation of the 60S ribosome. This chain is Ribosome biogenesis protein YTM1, found in Chaetomium globosum (strain ATCC 6205 / CBS 148.51 / DSM 1962 / NBRC 6347 / NRRL 1970) (Soil fungus).